The sequence spans 558 residues: Formate--tetrahydrofolate ligase (558 aa).

Threonine 66–threonine 73 is an ATP binding site.

This sequence belongs to the formate--tetrahydrofolate ligase family.

The catalysed reaction is (6S)-5,6,7,8-tetrahydrofolate + formate + ATP = (6R)-10-formyltetrahydrofolate + ADP + phosphate. Its pathway is one-carbon metabolism; tetrahydrofolate interconversion. This Clostridium kluyveri (strain NBRC 12016) protein is Formate--tetrahydrofolate ligase.